The primary structure comprises 189 residues: Putative manganese efflux pump MntP (189 aa).

6 consecutive transmembrane segments (helical) span residues 3-23, 41-61, 65-85, 104-124, 132-152, and 165-185; these read LSAT…ASIG, LIFG…GLFA, ILEW…CRMI, FWVL…IGVG, IVHT…LGML, and AEII…YEHI.

The protein belongs to the MntP (TC 9.B.29) family.

The protein resides in the cell inner membrane. Probably functions as a manganese efflux pump. In Yersinia enterocolitica serotype O:8 / biotype 1B (strain NCTC 13174 / 8081), this protein is Putative manganese efflux pump MntP.